The primary structure comprises 589 residues: MKQIRRWQRILILALLSISVFAPLIFVSNRLKSITPVGRREFIEELSKIRFTTNDLRLSAIEHEDGEGLKGPRLILFKDGEFNSSAESDGGNTYKNREEQVIVSQKMTVSSDEKGQILPTVNQLANKTDFKPPLSKGEKNTRVQPDRATDVKTKEIRDKIIQAKAYLNFAPPGSNSQVVKELRGRLKELERSVGDATKDKDLSKGALRRVKPMENVLYKASRVFNNCPAIATKLRAMNYNTEEQVQAQKNQAAYLMQLAARTTPKGLHCLSMRLTSEYFSLDPEKRQMPNQQNYFDANFNHYVVFSDNVLASSVVVNSTISSSKEPERIVFHVVTDSLNYPAISMWFLLNIQSKATIQILNIDDMDVLPRDYDQLLMKQNSNDPRFISTLNHARFYLPDIFPGLNKMVLLDHDVVVQRDLSRLWSIDMKGKVVGAVETCLEGESSFRSMSTFINFSDTWVAGKFSPRACTWAFGMNLIDLEEWRIRKLTSTYIKYFNLGTKRPLWKAGSLPIGWLTFYRQTLALDKRWHVMGLGRESGVKAVDIEQAAVIHYDGVMKPWLDIGKENYKRYWNIHVPYHHTYLQQCNLQA.

Residues 1 to 6 (MKQIRR) are Cytoplasmic-facing. Residues 7-27 (WQRILILALLSISVFAPLIFV) traverse the membrane as a helical; Signal-anchor for type II membrane protein segment. Over 28–589 (SNRLKSITPV…TYLQQCNLQA (562 aa)) the chain is Lumenal. N-linked (GlcNAc...) asparagine glycosylation is found at asparagine 83 and asparagine 126. The tract at residues 127 to 151 (KTDFKPPLSKGEKNTRVQPDRATDV) is disordered. The span at 136 to 151 (KGEKNTRVQPDRATDV) shows a compositional bias: basic and acidic residues. 2 N-linked (GlcNAc...) asparagine glycosylation sites follow: asparagine 317 and asparagine 454.

The protein belongs to the glycosyltransferase 8 family. As to expression, expressed in roots, inflorescences, siliques, leaves and stems.

It localises to the golgi apparatus membrane. Its pathway is glycan metabolism; pectin biosynthesis. Its function is as follows. Probably involved in pectin biosynthesis in cell walls. This is Probable galacturonosyltransferase 6 (GAUT6) from Arabidopsis thaliana (Mouse-ear cress).